The chain runs to 251 residues: Pyridoxine 5'-phosphate synthase (251 aa).

Asn7 is a 3-amino-2-oxopropyl phosphate binding site. Residue 9-10 (DH) coordinates 1-deoxy-D-xylulose 5-phosphate. Arg18 lines the 3-amino-2-oxopropyl phosphate pocket. His43 (proton acceptor) is an active-site residue. Residues Arg45 and His50 each coordinate 1-deoxy-D-xylulose 5-phosphate. Glu73 (proton acceptor) is an active-site residue. Thr103 is a binding site for 1-deoxy-D-xylulose 5-phosphate. Catalysis depends on His197, which acts as the Proton donor. Residues Gly198 and 219 to 220 (GH) each bind 3-amino-2-oxopropyl phosphate.

The protein belongs to the PNP synthase family. As to quaternary structure, homooctamer; tetramer of dimers.

It is found in the cytoplasm. It catalyses the reaction 3-amino-2-oxopropyl phosphate + 1-deoxy-D-xylulose 5-phosphate = pyridoxine 5'-phosphate + phosphate + 2 H2O + H(+). Its pathway is cofactor biosynthesis; pyridoxine 5'-phosphate biosynthesis; pyridoxine 5'-phosphate from D-erythrose 4-phosphate: step 5/5. Catalyzes the complicated ring closure reaction between the two acyclic compounds 1-deoxy-D-xylulose-5-phosphate (DXP) and 3-amino-2-oxopropyl phosphate (1-amino-acetone-3-phosphate or AAP) to form pyridoxine 5'-phosphate (PNP) and inorganic phosphate. This chain is Pyridoxine 5'-phosphate synthase, found in Caulobacter sp. (strain K31).